The following is a 95-amino-acid chain: Small ribosomal subunit protein bS6 (95 aa).

This sequence belongs to the bacterial ribosomal protein bS6 family.

In terms of biological role, binds together with bS18 to 16S ribosomal RNA. The polypeptide is Small ribosomal subunit protein bS6 (Bacillus licheniformis (strain ATCC 14580 / DSM 13 / JCM 2505 / CCUG 7422 / NBRC 12200 / NCIMB 9375 / NCTC 10341 / NRRL NRS-1264 / Gibson 46)).